We begin with the raw amino-acid sequence, 255 residues long: Putative glutamine amidotransferase YafJ (255 aa).

Catalysis depends on C2, which acts as the For GATase activity. The Glutamine amidotransferase type-2 domain occupies 2–251 (CELLGMSANV…PGEWRLFCLG (250 aa)).

The sequence is that of Putative glutamine amidotransferase YafJ (yafJ) from Escherichia coli (strain K12).